An 83-amino-acid polypeptide reads, in one-letter code: Mu-theraphotoxin-Hhn2j 3 (83 aa).

Residues 1–21 (MKALMFLALAGLVLLFVVGYA) form the signal peptide. Positions 22–48 (SESEEKEFPIELLSKIFAVDVFKGEER) are excised as a propeptide. 3 disulfides stabilise this stretch: Cys50/Cys65, Cys57/Cys70, and Cys64/Cys77. Leu81 bears the Leucine amide mark.

This sequence belongs to the neurotoxin 10 (Hwtx-1) family. 15 (Hntx-3) subfamily. Monomer. As to expression, expressed by the venom gland.

The protein localises to the secreted. Lethal neurotoxin. Selectively blocks tetrodotoxin-sensitive voltage-gated sodium channels (Nav). Does not affect tetrodotoxin-resistant voltage-gated sodium channels or calcium channels. This is Mu-theraphotoxin-Hhn2j 3 from Cyriopagopus hainanus (Chinese bird spider).